Reading from the N-terminus, the 448-residue chain is tRNA-2-methylthio-N(6)-dimethylallyladenosine synthase (448 aa).

In terms of domain architecture, MTTase N-terminal spans 3-119; that stretch reads GRVYVKTHGC…LPEMIDRARD (117 aa). 6 residues coordinate [4Fe-4S] cluster: C12, C49, C82, C156, C160, and C163. The Radical SAM core domain maps to 142 to 374; the sequence is RAEGPTAFVS…QETINANARR (233 aa). Residues 377–440 enclose the TRAM domain; it reads ESMVGTVQRV…PNSLRGELLG (64 aa).

The protein belongs to the methylthiotransferase family. MiaB subfamily. In terms of assembly, monomer. Requires [4Fe-4S] cluster as cofactor.

It localises to the cytoplasm. It carries out the reaction N(6)-dimethylallyladenosine(37) in tRNA + (sulfur carrier)-SH + AH2 + 2 S-adenosyl-L-methionine = 2-methylsulfanyl-N(6)-dimethylallyladenosine(37) in tRNA + (sulfur carrier)-H + 5'-deoxyadenosine + L-methionine + A + S-adenosyl-L-homocysteine + 2 H(+). Its function is as follows. Catalyzes the methylthiolation of N6-(dimethylallyl)adenosine (i(6)A), leading to the formation of 2-methylthio-N6-(dimethylallyl)adenosine (ms(2)i(6)A) at position 37 in tRNAs that read codons beginning with uridine. The protein is tRNA-2-methylthio-N(6)-dimethylallyladenosine synthase of Alkalilimnicola ehrlichii (strain ATCC BAA-1101 / DSM 17681 / MLHE-1).